The sequence spans 950 residues: 2-oxoglutarate dehydrogenase E1 component (950 aa).

It belongs to the alpha-ketoglutarate dehydrogenase family. In terms of assembly, homodimer. Part of the 2-oxoglutarate dehydrogenase (OGDH) complex composed of E1 (2-oxoglutarate dehydrogenase), E2 (dihydrolipoamide succinyltransferase) and E3 (dihydrolipoamide dehydrogenase); the complex contains multiple copies of the three enzymatic components (E1, E2 and E3). The cofactor is thiamine diphosphate.

It catalyses the reaction N(6)-[(R)-lipoyl]-L-lysyl-[protein] + 2-oxoglutarate + H(+) = N(6)-[(R)-S(8)-succinyldihydrolipoyl]-L-lysyl-[protein] + CO2. E1 component of the 2-oxoglutarate dehydrogenase (OGDH) complex which catalyzes the decarboxylation of 2-oxoglutarate, the first step in the conversion of 2-oxoglutarate to succinyl-CoA and CO(2). The protein is 2-oxoglutarate dehydrogenase E1 component (odhA) of Cupriavidus necator (strain ATCC 17699 / DSM 428 / KCTC 22496 / NCIMB 10442 / H16 / Stanier 337) (Ralstonia eutropha).